We begin with the raw amino-acid sequence, 365 residues long: Leu/Ile/Val/Thr-binding protein (365 aa).

Residues 1–21 (MKGKTLLAGCIALSLSHMAFA) form the signal peptide. Cys-74 and Cys-99 form a disulfide bridge.

This sequence belongs to the leucine-binding protein family.

It localises to the periplasm. Functionally, this protein is a component of the leucine, isoleucine, valine, threonine transport system, which is one of the two periplasmic binding protein-dependent transport systems of the high-affinity transport of the branched-chain amino acids. The polypeptide is Leu/Ile/Val/Thr-binding protein (livJ) (Salmonella typhimurium (strain LT2 / SGSC1412 / ATCC 700720)).